A 397-amino-acid polypeptide reads, in one-letter code: Tyrosine--tRNA ligase (397 aa).

Positions Pro-39–His-48 match the 'HIGH' region motif. A 'KMSKS' region motif is present at residues Lys-223–Ser-227. ATP is bound at residue Lys-226. In terms of domain architecture, S4 RNA-binding spans Tyr-334 to Leu-395.

It belongs to the class-I aminoacyl-tRNA synthetase family. TyrS type 2 subfamily. As to quaternary structure, homodimer.

The protein localises to the cytoplasm. The enzyme catalyses tRNA(Tyr) + L-tyrosine + ATP = L-tyrosyl-tRNA(Tyr) + AMP + diphosphate + H(+). Catalyzes the attachment of tyrosine to tRNA(Tyr) in a two-step reaction: tyrosine is first activated by ATP to form Tyr-AMP and then transferred to the acceptor end of tRNA(Tyr). The polypeptide is Tyrosine--tRNA ligase (Methylococcus capsulatus (strain ATCC 33009 / NCIMB 11132 / Bath)).